The following is a 235-amino-acid chain: Myelin protein zero-like protein 3 (235 aa).

Residues 1–31 form the signal peptide; the sequence is MQQRGAAGSRGCALFPLLGVLFFQGVYIVFS. Residues 32-148 form the Ig-like V-type domain; the sequence is LEIRADAHVR…NIPMTELTVT (117 aa). The Extracellular segment spans residues 32–158; it reads LEIRADAHVR…ERGFGTMLSS (127 aa). Residues Cys-52 and Cys-128 are joined by a disulfide bond. An N-linked (GlcNAc...) asparagine glycan is attached at Asn-123. A helical membrane pass occupies residues 159-179; sequence VALLSILVFVPSAVVVALLLV. At 180 to 235 the chain is on the cytoplasmic side; that stretch reads RMGRKAAGLKKRSRSGYKKSSIEVSDDTDQEEEEACMARLCVRCAECLDSDYEETY.

It belongs to the myelin P0 protein family.

The protein localises to the membrane. Functionally, mediates homophilic cell-cell adhesion. In Homo sapiens (Human), this protein is Myelin protein zero-like protein 3 (MPZL3).